Consider the following 204-residue polypeptide: HTH-type transcriptional repressor KstR (204 aa).

The HTH tetR-type domain occupies 18-78 (RERRKRILDA…SALGREFERI (61 aa)). Residues 41-60 (QMRAVAERADVAVGTLYRYF) constitute a DNA-binding region (H-T-H motif).

As to quaternary structure, homodimer.

Functionally, controls the expression of genes used for utilizing diverse lipids as energy sources. The chain is HTH-type transcriptional repressor KstR (kstR) from Mycolicibacterium smegmatis (strain ATCC 700084 / mc(2)155) (Mycobacterium smegmatis).